The chain runs to 409 residues: Elongation factor Tu, chloroplastic (409 aa).

One can recognise a tr-type G domain in the interval 10–214 (KPHVNIGTIG…AVDEYIPTPE (205 aa)). A G1 region spans residues 19 to 26 (GHVDHGKT). A GTP-binding site is contributed by 19–26 (GHVDHGKT). Thr-26 lines the Mg(2+) pocket. The interval 60–64 (GITIN) is G2. The interval 81-84 (DCPG) is G3. Residues 81–85 (DCPGH) and 136–139 (NKED) contribute to the GTP site. The G4 stretch occupies residues 136-139 (NKED). The tract at residues 174–176 (SAL) is G5.

It belongs to the TRAFAC class translation factor GTPase superfamily. Classic translation factor GTPase family. EF-Tu/EF-1A subfamily.

The protein localises to the plastid. The protein resides in the chloroplast. It catalyses the reaction GTP + H2O = GDP + phosphate + H(+). In terms of biological role, GTP hydrolase that promotes the GTP-dependent binding of aminoacyl-tRNA to the A-site of ribosomes during protein biosynthesis. The sequence is that of Elongation factor Tu, chloroplastic (tufA) from Phaeodactylum tricornutum (strain CCAP 1055/1).